Here is an 80-residue protein sequence, read N- to C-terminus: Acyl carrier protein (80 aa).

Positions 3–78 constitute a Carrier domain; the sequence is DDTFSRIQSI…QVLEYIEAES (76 aa). Residue Ser38 is modified to O-(pantetheine 4'-phosphoryl)serine.

The protein belongs to the acyl carrier protein (ACP) family. In terms of processing, 4'-phosphopantetheine is transferred from CoA to a specific serine of apo-ACP by AcpS. This modification is essential for activity because fatty acids are bound in thioester linkage to the sulfhydryl of the prosthetic group.

The protein localises to the plastid. It is found in the chloroplast. The protein operates within lipid metabolism; fatty acid biosynthesis. In terms of biological role, carrier of the growing fatty acid chain in fatty acid biosynthesis. In Trieres chinensis (Marine centric diatom), this protein is Acyl carrier protein.